Consider the following 138-residue polypeptide: Acidic phospholipase A2 BE-I-PLA2 (138 aa).

The signal sequence occupies residues 1-16 (MRTLWIMAVLLVGVEG). 7 cysteine pairs are disulfide-bonded: C42-C131, C44-C60, C59-C111, C65-C138, C66-C104, C73-C97, and C91-C102. Ca(2+)-binding residues include Y43, G45, and G47. H63 is a catalytic residue. Residue D64 coordinates Ca(2+). D105 is an active-site residue.

This sequence belongs to the phospholipase A2 family. Group II subfamily. D49 sub-subfamily. Ca(2+) is required as a cofactor. As to expression, expressed by the venom gland.

It is found in the secreted. The enzyme catalyses a 1,2-diacyl-sn-glycero-3-phosphocholine + H2O = a 1-acyl-sn-glycero-3-phosphocholine + a fatty acid + H(+). Functionally, snake venom phospholipase A2 that shows a potent inhibition of human platelet aggregation. This inhibition is concentration-dependent when aggregation is induced by collagen, and concentration-independent when aggregation is induced by arachidonic acid. In human umbilical-cord vein endothelial cells, this toxin stimulates endothelial cells to release prostaglandin I(2), suggesting an increase of its potential anti-platelet activity in vivo. PLA2 catalyzes the calcium-dependent hydrolysis of the 2-acyl groups in 3-sn-phosphoglycerides. The chain is Acidic phospholipase A2 BE-I-PLA2 from Bothrops erythromelas (Caatinga lance head).